The primary structure comprises 544 residues: Histone-arginine methyltransferase CARMER (544 aa).

In terms of domain architecture, SAM-dependent MTase PRMT-type spans 150 to 459 (ASQYFQFYGY…QSYDVTIDLH (310 aa)). Positions 163, 172, 196, 218, 247, and 275 each coordinate S-adenosyl-L-methionine. Residues 505-520 (DTQQQQQGSRNSNSML) are compositionally biased toward polar residues. The interval 505–527 (DTQQQQQGSRNSNSMLNGGLSVN) is disordered. R514 carries the asymmetric dimethylarginine; by autocatalysis modification.

It belongs to the class I-like SAM-binding methyltransferase superfamily. Protein arginine N-methyltransferase family. Homodimer. Post-translationally, the dimethylated protein is the major form.

Its subcellular location is the cytoplasm. The protein resides in the nucleus. It catalyses the reaction L-arginyl-[protein] + 2 S-adenosyl-L-methionine = N(omega),N(omega)-dimethyl-L-arginyl-[protein] + 2 S-adenosyl-L-homocysteine + 2 H(+). Its function is as follows. Methylates (mono- and asymmetric dimethylation) the guanidino nitrogens of arginyl residues in proteins. May methylate histone H3 at 'Arg-17' and activate transcription via chromatin remodeling. This Drosophila grimshawi (Hawaiian fruit fly) protein is Histone-arginine methyltransferase CARMER (Art4).